Here is a 197-residue protein sequence, read N- to C-terminus: Imidazoleglycerol-phosphate dehydratase (197 aa).

It belongs to the imidazoleglycerol-phosphate dehydratase family.

The protein resides in the cytoplasm. It carries out the reaction D-erythro-1-(imidazol-4-yl)glycerol 3-phosphate = 3-(imidazol-4-yl)-2-oxopropyl phosphate + H2O. The protein operates within amino-acid biosynthesis; L-histidine biosynthesis; L-histidine from 5-phospho-alpha-D-ribose 1-diphosphate: step 6/9. This is Imidazoleglycerol-phosphate dehydratase from Xanthobacter autotrophicus (strain ATCC BAA-1158 / Py2).